Here is a 428-residue protein sequence, read N- to C-terminus: MPAIVLVGAQWGDEGKGKATDALGARVDYVVKFNGGNNAGHTVVVGDEKYALHLLPSGILTPGVTPVIGNGVVVDLSVLFEEIDALTARGVDCSKLLLSASAHVIAPYHRVLDQVTERFLGSRKIGTTGRGIGPTYADKINRIGIRVQDLFDESILRQKVEGALDQKNHLLLKVYNRRAVSVDETVENLLSFRDRIAPMVTDVSLELSRALDRDEIVLFEGGQATMLDIDHGTYPYVTSSNATAAGACTGAGIPPNRVDRIVAVVKAYTTRVGEGPFPTELLDADGEKLRQDGGEFGTTTGRPRRTGWYDAVISRYSARINGVTDFVLTKLDTLTGWERIPVCVAYDVDGVRHDEIPMSQSDFHHAKPIYEFFDGWTEDITGARSMEDLPKNAQAYVEALEAISGSRISAVGVGPDREQTVVRHDLLG.

Residues 12 to 18 (GDEGKGK) and 40 to 42 (GHT) contribute to the GTP site. The Proton acceptor role is filled by D13. Mg(2+) is bound by residues D13 and G40. IMP-binding positions include 13-16 (DEGK), 38-41 (NAGH), T128, R142, Q223, T238, and R302. H41 acts as the Proton donor in catalysis. A substrate-binding site is contributed by 298 to 304 (TTTGRPR). GTP-binding positions include R304, 330–332 (KLD), and 412–414 (GVG).

It belongs to the adenylosuccinate synthetase family. Homodimer. Requires Mg(2+) as cofactor.

It is found in the cytoplasm. The enzyme catalyses IMP + L-aspartate + GTP = N(6)-(1,2-dicarboxyethyl)-AMP + GDP + phosphate + 2 H(+). It functions in the pathway purine metabolism; AMP biosynthesis via de novo pathway; AMP from IMP: step 1/2. Functionally, plays an important role in the de novo pathway of purine nucleotide biosynthesis. Catalyzes the first committed step in the biosynthesis of AMP from IMP. In Kineococcus radiotolerans (strain ATCC BAA-149 / DSM 14245 / SRS30216), this protein is Adenylosuccinate synthetase.